Here is a 313-residue protein sequence, read N- to C-terminus: D-alanine--D-alanine ligase (313 aa).

Residues 108-308 (KLVWQQLGIP…YQELVVKVLA (201 aa)) form the ATP-grasp domain. Residue 138-193 (VAKLGLPLFVKPASEGSSVAVIKVKTADALVPALEEAVKFDKIVVVEKSIEGGGEY) participates in ATP binding. Mg(2+)-binding residues include D262, E275, and N277.

It belongs to the D-alanine--D-alanine ligase family. Mg(2+) is required as a cofactor. The cofactor is Mn(2+).

The protein localises to the cytoplasm. The enzyme catalyses 2 D-alanine + ATP = D-alanyl-D-alanine + ADP + phosphate + H(+). Its pathway is cell wall biogenesis; peptidoglycan biosynthesis. In terms of biological role, cell wall formation. In Paraburkholderia phymatum (strain DSM 17167 / CIP 108236 / LMG 21445 / STM815) (Burkholderia phymatum), this protein is D-alanine--D-alanine ligase.